The primary structure comprises 80 residues: Serine protease inhibitor Kazal-type 6 (80 aa).

The N-terminal stretch at 1 to 23 (MKLSGMFLLLSLALFCFLTGVFS) is a signal peptide. Residue glutamine 24 is modified to Pyrrolidone carboxylic acid. The 57-residue stretch at 24-80 (QGGQVDCGEFQDPKVYCTRESNPHCGSDGQTYGNKCAFCKAIVKSGGKISLKHPGKC) folds into the Kazal-like domain. Intrachain disulfides connect cysteine 30–cysteine 62, cysteine 40–cysteine 59, and cysteine 48–cysteine 80.

The protein localises to the secreted. Its function is as follows. Serine protease inhibitor selective for kallikreins. Efficiently inhibits KLK4, KLK5, KLK6, KLK7, KLK12, KLK13 and KLK14. Doesn't inhibit KLK8. The protein is Serine protease inhibitor Kazal-type 6 (SPINK6) of Homo sapiens (Human).